Here is a 107-residue protein sequence, read N- to C-terminus: Guanylin (107 aa).

An N-terminal signal peptide occupies residues 1–20 (MNTFLLSALCLGAWAALVGA). Residues 21-92 (VTVQDGDFSF…LNRLAVIAQD (72 aa)) constitute a propeptide that is removed on maturation. 3 disulfides stabilise this stretch: Cys61/Cys74, Cys96/Cys104, and Cys99/Cys107.

Belongs to the guanylin family.

The protein resides in the secreted. In terms of biological role, endogenous activator of intestinal guanylate cyclase. It stimulates this enzyme through the same receptor binding region as the heat-stable enterotoxins. This Cavia porcellus (Guinea pig) protein is Guanylin (GUCA2A).